The following is a 20-amino-acid chain: Cathepsin L1 (20 aa).

Positions 1 to 10 (AVPDKIDPRE) are enriched in basic and acidic residues. A disordered region spans residues 1–20 (AVPDKIDPRESGYVTGVKDQ).

This sequence belongs to the peptidase C1 family. Dimer of a heavy and a light chain linked by disulfide bonds.

It localises to the lysosome. The catalysed reaction is Specificity close to that of papain. As compared to cathepsin B, cathepsin L exhibits higher activity toward protein substrates, but has little activity on Z-Arg-Arg-NHMec, and no peptidyl-dipeptidase activity.. Functionally, thiol protease that assists the parasite in burrowing through the gut wall and liver of its mammalian host. In Fasciola hepatica (Liver fluke), this protein is Cathepsin L1.